A 126-amino-acid polypeptide reads, in one-letter code: Large ribosomal subunit protein bL12 (126 aa).

It belongs to the bacterial ribosomal protein bL12 family. Homodimer. Part of the ribosomal stalk of the 50S ribosomal subunit. Forms a multimeric L10(L12)X complex, where L10 forms an elongated spine to which 2 to 4 L12 dimers bind in a sequential fashion. Binds GTP-bound translation factors.

Forms part of the ribosomal stalk which helps the ribosome interact with GTP-bound translation factors. Is thus essential for accurate translation. This is Large ribosomal subunit protein bL12 from Prosthecochloris aestuarii (strain DSM 271 / SK 413).